Consider the following 2568-residue polypeptide: Highly reducing polyketide synthase resH (2568 aa).

The region spanning 9 to 437 (PEPIAIVGMA…GANAHAILDA (429 aa)) is the Ketosynthase family 3 (KS3) domain. Catalysis depends on for beta-ketoacyl synthase activity residues cysteine 184, histidine 319, and histidine 359. In terms of domain architecture, Malonyl-CoA:ACP transacylase (MAT) spans 549-877 (FIFTGQGAQW…KLAGSLFLSG (329 aa)). The interval 942-1081 (HDLLGSRLPG…TNDQLLWPDD (140 aa)) is N-terminal hotdog fold. A PKS/mFAS DH domain is found at 942 to 1244 (HDLLGSRLPG…FSSLETASSD (303 aa)). The Proton acceptor; for dehydratase activity role is filled by histidine 974. The interval 1091–1244 (NKDSYDRRWY…FSSLETASSD (154 aa)) is C-terminal hotdog fold. Residue aspartate 1156 is the Proton donor; for dehydratase activity of the active site. Positions 1295–1595 (VTRLAIRSSA…SGADVVLDDY (301 aa)) are methyltransferase (CMet) domain. The region spanning 1853–2154 (GRLDSFYFKE…QEDSVGLAVL (302 aa)) is the Enoyl reductase (ER) domain. Positions 2177-2357 (ASYLLIGCLG…QATSIALGMI (181 aa)) constitute a Ketoreductase (KR) domain. Positions 2485-2563 (AVKSAILGLI…GLADQVVSLA (79 aa)) constitute a Carrier domain. An O-(pantetheine 4'-phosphoryl)serine modification is found at serine 2522.

Requires pantetheine 4'-phosphate as cofactor.

It functions in the pathway antifungal biosynthesis. Its function is as follows. Highly reducing polyketide synthase; part of the gene cluster that mediates the biosynthesis of the tetrahydropyranyl antifungal agent restricticin that acts as an inhibitor of CYP51 and blocks the ergosterol biosynthesis. The highly reducing polyketide synthase resH, the short chain dehydrogenase resG, the cyclase resF, the FAD-dependent monooxygenase resA and the enoylreductase resD are required to generate the first stable intermediate desmethylrestrictinol. ResH with resD biosynthesize the first polyketide chain intermediate that is reduced by resG, followed by epoxidation by resA before 6-endo cyclization via epoxide opening by resF leads to desmethylrestrictinol. The methyltransferase resE then catalyzes the C4 O-methylation of desmethylrestrictinol to produce restrictinol, and the nonribosomal peptide synthetase resC catalyzes the C3 esterification of restrictinol with glycine that leads to restricticin. This Aspergillus sclerotiorum protein is Highly reducing polyketide synthase resH.